An 853-amino-acid polypeptide reads, in one-letter code: Leucine-rich repeat and death domain-containing protein 1 (853 aa).

The segment at 1 to 78 (MSEDGSNVEP…EEKNTGIPFS (78 aa)) is disordered. The span at 19–31 (LEEPGSEISDLLD) shows a compositional bias: acidic residues. The segment covering 56-65 (QSAASFTSQL) has biased composition (polar residues). LRR repeat units follow at residues 133 to 157 (MKSD…IVKV), 159 to 180 (YVKY…DPGD), 183 to 204 (GLEI…IQLF), 206 to 227 (NLKI…LLQL), 229 to 251 (NMRQ…EHLR), 252 to 274 (YLET…SSLK), 275 to 297 (NLRI…CFLP), 298 to 319 (KLNS…VREL), 321 to 342 (NLES…IFQL), 344 to 365 (KIKE…IENF), 367 to 388 (ELRL…ISHC), 390 to 411 (NLES…IRKL), 413 to 435 (NLRQ…SHLS), 436 to 457 (NIHI…IKNC), 459 to 481 (KITR…CALQ), 482 to 503 (SLDY…MSFS), 505 to 527 (QLLH…CSLT), 528 to 549 (NLEY…ISAM), 551 to 573 (SLHV…CSLK), 574 to 596 (NLRV…SKLK), 597 to 618 (RIQK…LCQL), 620 to 641 (TLEE…PEEV), 646 to 668 (QLKI…GELR), 669 to 690 (SLVS…FLSL), 692 to 713 (VLQS…IYKL), and 715 to 736 (SLKE…ICKG). The Death domain maps to 757-845 (LEKIFNIVAN…DIMDKITALN (89 aa)).

The chain is Leucine-rich repeat and death domain-containing protein 1 (Lrrd1) from Mus musculus (Mouse).